The chain runs to 876 residues: Protein TORMOZ EMBRYO DEFECTIVE (876 aa).

WD repeat units lie at residues 58–97 (GESDTLTALALSPDDKLLFSAGHSRQIRVWDLETLKCIRS), 100–139 (GHEGPVMGMACHASGGLLATAGADRKVLVWDVDGGFCTHY), 142–183 (GHKG…TEKK), 190–229 (KHFSAVTSIALSEDGLTLFSAGRDKVVNLWDLHDYSCKAT), 255–294 (LDQKKSKKKESDSQATYFITVGERGVVRIWKSEGSICLYE), 308–347 (ESKRGFTAAAMLPSDHGLLCVTADQQFFFYSVVENVEETE), 356–396 (GYNE…CSYV), 399–441 (GHKE…CIGV), 444–484 (GHNG…EDSE), 497–536 (AHDKDINSVAVARNDSLVCTGSEDRTASIWRLPDLVHVVT), 539–580 (GHKR…KTFE), 581–620 (GHTSSVLRASFITDGTQFVSCGADGLLKLWNVNTSECIAT), and 623–662 (QHEDKVWALAVGKKTEMIATGGGDAVINLWHDSTASDKED). The segment at 816–876 (VETEYPKDEK…AEAQGSVIAV (61 aa)) is disordered. Basic and acidic residues predominate over residues 819–831 (EYPKDEKKKEKDV). Residues 848-855 (SRKRKSQK) carry the Nuclear localization signal motif. The segment covering 849–864 (RKRKSQKSKGKSNKKR) has biased composition (basic residues).

Preferentially expressed in dividing cells in a variety of tissues and meristematic regions.

Its subcellular location is the nucleus. It localises to the nucleolus. Essential protein involved in the regulation of cell division planes during embryogenesis which defines cell patterning, especially longitudinal division planes of the proembryo, probably via the regulation of embryo patterning genes expression patterns. This is Protein TORMOZ EMBRYO DEFECTIVE from Arabidopsis thaliana (Mouse-ear cress).